The chain runs to 192 residues: Potassium channel HX13_20290 (192 aa).

Residues 1–24 (MTKGRLEAFSDGVLAIIITIMVLE) form a helical membrane-spanning segment. Positions 5-11 (RLEAFSD) match the RxxxFSD motif motif. Position 25 (Leu-25) is a topological domain, cytoplasmic. The tract at residues 26–29 (KVPE) is short helix H1. Over 26 to 39 (KVPEGSSWASLQPI) the chain is Extracellular. Positions 31–37 (SSWASLQ) are short helix H2. A helical transmembrane segment spans residues 40-65 (LPRFLAYIFSFIYVGIYWNNHHHLFQ). Residues 66–71 (TVKKVN) are Cytoplasmic-facing. A helical membrane pass occupies residues 72–93 (GSILWANLHLLFWLSLMPIATE). Topologically, residues 94-101 (WIGTSHFA) are extracellular. Residues 102-126 (QNPVATYGIGLIMSAIAYTILENVI) traverse the membrane as a helical segment. The Cytoplasmic segment spans residues 127 to 133 (IRCEGEN). The helical transmembrane segment at 134–162 (SKLKEAIHSKFKEYISIIFYVLGIATSFF) threads the bilayer. At 163-164 (YP) the chain is on the extracellular side. Residues 165 to 180 (YIAIGFYYLVALIWLI) traverse the membrane as a helical segment. Topologically, residues 181–192 (PDKRIEKSLKEN) are cytoplasmic.

The protein belongs to the TMEM175 family. As to quaternary structure, homotetramer.

It is found in the membrane. It catalyses the reaction K(+)(in) = K(+)(out). Functionally, potassium channel. The polypeptide is Potassium channel HX13_20290 (Chryseobacterium sp. (strain P1-3)).